Reading from the N-terminus, the 418-residue chain is Gamma-glutamyl phosphate reductase (418 aa).

Belongs to the gamma-glutamyl phosphate reductase family.

It localises to the cytoplasm. It carries out the reaction L-glutamate 5-semialdehyde + phosphate + NADP(+) = L-glutamyl 5-phosphate + NADPH + H(+). The protein operates within amino-acid biosynthesis; L-proline biosynthesis; L-glutamate 5-semialdehyde from L-glutamate: step 2/2. In terms of biological role, catalyzes the NADPH-dependent reduction of L-glutamate 5-phosphate into L-glutamate 5-semialdehyde and phosphate. The product spontaneously undergoes cyclization to form 1-pyrroline-5-carboxylate. This chain is Gamma-glutamyl phosphate reductase, found in Syntrophotalea carbinolica (strain DSM 2380 / NBRC 103641 / GraBd1) (Pelobacter carbinolicus).